The chain runs to 442 residues: tRNA modification GTPase MnmE (442 aa).

3 residues coordinate (6S)-5-formyl-5,6,7,8-tetrahydrofolate: Arg23, Glu82, and Lys121. A TrmE-type G domain is found at 215 to 364 (GTSLILAGKP…VKQALIQWMQ (150 aa)). Asn225 contributes to the K(+) binding site. Residues 225 to 230 (NVGKSS), 244 to 250 (THIPGTT), 269 to 272 (DTAG), and 325 to 328 (NKAD) contribute to the GTP site. Ser229 is a binding site for Mg(2+). 3 residues coordinate K(+): Thr244, Ile246, and Thr249. Thr250 is a Mg(2+) binding site. Lys442 is a (6S)-5-formyl-5,6,7,8-tetrahydrofolate binding site.

It belongs to the TRAFAC class TrmE-Era-EngA-EngB-Septin-like GTPase superfamily. TrmE GTPase family. Homodimer. Heterotetramer of two MnmE and two MnmG subunits. K(+) is required as a cofactor.

It is found in the cytoplasm. Its function is as follows. Exhibits a very high intrinsic GTPase hydrolysis rate. Involved in the addition of a carboxymethylaminomethyl (cmnm) group at the wobble position (U34) of certain tRNAs, forming tRNA-cmnm(5)s(2)U34. This Chlamydia pneumoniae (Chlamydophila pneumoniae) protein is tRNA modification GTPase MnmE.